A 453-amino-acid chain; its full sequence is MKECKTFNNKKVLILGLAKSGEAAARLLSRLGAIVTVNDGKAFEENPAAQSLLEEGIKVVCGSHPLELLDEDFAVMVKNPGIPYQNPMVEKALSKGIPVLTEVELAYLISEAPIIAITGSNGKTTTTTMIADVLNHGGKSALLSGNIGFPASEVAMTASQDDILTMELSSFQLMGIKDFHPHIALITNLMPTHLDYHGSFDAYIQAKWNIQNNMTADDVLILNAEQDQTKELAQKTQASLVYFSSKEKVEGAYQEDGKLFYKGEYIMDAQSLGVPGLHNVENALATIAVAKLSGISNQAIAETLSSFGGVKHRLQKLGTIKDVAFYNDSKSTNILACQKALSGFDNNKVILIAGGLDRGNAFDTLIPDIKGLKKMILLGESAEKMKEAAERAGVGYLEAKDVADATRIAFEQAQPGDIILLSPANASWDMYPNFEVRGDEFIESFQQLKGDME.

119 to 125 contacts ATP; the sequence is GSNGKTT.

Belongs to the MurCDEF family.

It localises to the cytoplasm. The enzyme catalyses UDP-N-acetyl-alpha-D-muramoyl-L-alanine + D-glutamate + ATP = UDP-N-acetyl-alpha-D-muramoyl-L-alanyl-D-glutamate + ADP + phosphate + H(+). The protein operates within cell wall biogenesis; peptidoglycan biosynthesis. Its function is as follows. Cell wall formation. Catalyzes the addition of glutamate to the nucleotide precursor UDP-N-acetylmuramoyl-L-alanine (UMA). The chain is UDP-N-acetylmuramoylalanine--D-glutamate ligase from Streptococcus uberis (strain ATCC BAA-854 / 0140J).